The sequence spans 394 residues: Acetate kinase 1 (394 aa).

Asn8 is a binding site for Mg(2+). ATP is bound at residue Lys15. Residue Arg90 coordinates substrate. The active-site Proton donor/acceptor is Asp147. Residues 207–211 (HLGSG) and 282–284 (DMR) each bind ATP. Position 382 (Glu382) interacts with Mg(2+).

The protein belongs to the acetokinase family. As to quaternary structure, homodimer. Mg(2+) serves as cofactor. The cofactor is Mn(2+).

The protein localises to the cytoplasm. The enzyme catalyses acetate + ATP = acetyl phosphate + ADP. It participates in metabolic intermediate biosynthesis; acetyl-CoA biosynthesis; acetyl-CoA from acetate: step 1/2. Its function is as follows. Catalyzes the formation of acetyl phosphate from acetate and ATP. Can also catalyze the reverse reaction. The protein is Acetate kinase 1 of Latilactobacillus sakei subsp. sakei (strain 23K) (Lactobacillus sakei subsp. sakei).